A 243-amino-acid chain; its full sequence is Cell division protein ZipA (243 aa).

Topologically, residues 1-4 are periplasmic; that stretch reads MSDV. The chain crosses the membrane as a helical span at residues 5-25; sequence TLLRIGIAIVGILFVAAVFFF. Over 26 to 243 the chain is Cytoplasmic; the sequence is STPKTSAHRV…VPPLIKNSRW (218 aa). The tract at residues 32 to 89 is disordered; the sequence is AHRVRTKKEEPPRERREPMLSTEADNSPPQGVDEVPASVSQQQVNPEANKPGEVQLGK. Residues 38 to 49 show a composition bias toward basic and acidic residues; sequence KKEEPPRERREP.

It belongs to the ZipA family. Interacts with FtsZ via their C-terminal domains.

The protein resides in the cell inner membrane. In terms of biological role, essential cell division protein that stabilizes the FtsZ protofilaments by cross-linking them and that serves as a cytoplasmic membrane anchor for the Z ring. Also required for the recruitment to the septal ring of downstream cell division proteins. This Xylella fastidiosa (strain 9a5c) protein is Cell division protein ZipA.